Consider the following 315-residue polypeptide: Large ribosomal subunit protein uL10 (315 aa).

Residues 285 to 294 are compositionally biased toward low complexity; that stretch reads AAAPAASAAP. The disordered stretch occupies residues 285 to 315; that stretch reads AAAPAASAAPAKEEKEESEESDDDMGFGLFD. A compositionally biased stretch (acidic residues) spans 300–309; sequence EESEESDDDM.

Belongs to the universal ribosomal protein uL10 family. In terms of assembly, P0 forms a pentameric complex by interaction with dimers of P1 and P2. In terms of processing, phosphorylated.

In terms of biological role, ribosomal protein P0 is the functional equivalent of E.coli protein L10. This chain is Large ribosomal subunit protein uL10 (RPLP0), found in Lithobates sylvaticus (Wood frog).